A 1426-amino-acid polypeptide reads, in one-letter code: Ferlin 2 (1426 aa).

5 C2 domains span residues 1–111 (MGKT…QIRK), 161–279 (RKAV…PRWF), 512–638 (EKSK…ESPT), 1031–1154 (SEDR…QKSM), and 1189–1318 (KAGE…TLNS). Residues 1357–1377 (SKPVGLGREPPNRDPRLTTPQ) form a disordered region. Over residues 1366 to 1377 (PPNRDPRLTTPQ) the composition is skewed to basic and acidic residues. Residues 1404–1424 (VAAVVFLSIWIFVVAFLYPSL) traverse the membrane as a helical segment.

This sequence belongs to the ferlin family.

Its subcellular location is the membrane. The protein localises to the inner membrane complex. It localises to the cytoplasmic vesicle. It is found in the secretory vesicle. The protein resides in the rhoptry. Its function is as follows. Regulates rhoptry secretion. Required for completing the lytic cycle. Required for host cell invasion. Not required for microneme secretion and conoid extrusion. In Toxoplasma gondii, this protein is Ferlin 2.